The sequence spans 455 residues: Phosphoglycerate kinase, glycosomal (455 aa).

(2R)-3-phosphoglycerate contacts are provided by valine 23, aspartate 24, phenylalanine 25, asparagine 26, arginine 39, serine 61, histidine 62, glycine 64, arginine 65, arginine 132, histidine 168, and arginine 169. 2 residues coordinate ADP: glycine 214 and alanine 215. A CDP-binding site is contributed by glycine 214. Residues alanine 215 and lysine 216 each coordinate AMP. An ATP-binding site is contributed by alanine 215. Alanine 215 is a Mg(2+) binding site. Position 216 (lysine 216) interacts with (2R)-3-phosphoglycerate. CDP is bound at residue aspartate 219. Mg(2+) is bound at residue aspartate 219. The ADP site is built by lysine 220 and glycine 238. Residue lysine 220 participates in AMP binding. Lysine 220 is an ATP binding site. Glycine 238 is a binding site for CDP. The AMP site is built by alanine 239 and alanine 311. The ATP site is built by alanine 239 and alanine 311. Positions 311 and 335 each coordinate ADP. Residues glycine 336 and phenylalanine 341 each coordinate CDP. Phenylalanine 341, glutamate 342, aspartate 374, and threonine 375 together coordinate ADP. Glutamate 342 lines the AMP pocket. The ATP site is built by glutamate 342, aspartate 374, and threonine 375. Aspartate 374 is a binding site for Mg(2+). The interval aspartate 417 to proline 455 is topogenic signal.

Belongs to the phosphoglycerate kinase family. As to quaternary structure, monomer. The cofactor is Mg(2+).

The protein localises to the glycosome. The enzyme catalyses (2R)-3-phosphoglycerate + ATP = (2R)-3-phospho-glyceroyl phosphate + ADP. It functions in the pathway carbohydrate degradation; glycolysis; pyruvate from D-glyceraldehyde 3-phosphate: step 2/5. This Crithidia fasciculata protein is Phosphoglycerate kinase, glycosomal (PGKC).